Consider the following 137-residue polypeptide: Thionin-like protein 1 (137 aa).

The N-terminal stretch at 1-23 is a signal peptide; the sequence is MEDKRVAMLVVMMLVMGNMLIEA.

It belongs to the plant thionin (TC 1.C.44) family. Post-translationally, is disulfide-linked.

It is found in the secreted. Functionally, may be involved in plant defense. This is Thionin-like protein 1 from Arabidopsis thaliana (Mouse-ear cress).